The sequence spans 102 residues: Small ribosomal subunit protein uS10 (102 aa).

This sequence belongs to the universal ribosomal protein uS10 family. In terms of assembly, part of the 30S ribosomal subunit.

Involved in the binding of tRNA to the ribosomes. The chain is Small ribosomal subunit protein uS10 from Mycoplasma mobile (strain ATCC 43663 / 163K / NCTC 11711) (Mesomycoplasma mobile).